A 113-amino-acid polypeptide reads, in one-letter code: Protein NATD1 (113 aa).

Residues 1–16 (MAQSPAAASPGAPEQG) show a composition bias toward low complexity. Residues 1-20 (MAQSPAAASPGAPEQGCPIR) form a disordered region. Residues 22–112 (EHDRRRRQFT…PLPQYLERLQ (91 aa)) enclose the N-acetyltransferase domain.

It belongs to the NATD1 family.

The chain is Protein NATD1 (NATD1) from Bos taurus (Bovine).